We begin with the raw amino-acid sequence, 266 residues long: L-cystine-binding protein TcyJ (266 aa).

A signal peptide spans 1–29 (MKLAHLGRQALMGVMAVALVAGMSVKSFA).

Belongs to the bacterial solute-binding protein 3 family. As to quaternary structure, the complex is composed of two ATP-binding proteins (TcyN), two transmembrane proteins (TcyL) and a solute-binding protein (TcyJ).

Its subcellular location is the periplasm. In terms of biological role, part of the ABC transporter complex TcyJLN involved in L-cystine import. Binds cystine. This Escherichia coli O6:H1 (strain CFT073 / ATCC 700928 / UPEC) protein is L-cystine-binding protein TcyJ.